Consider the following 691-residue polypeptide: MARDFPLERVRNIGIAAHIDAGKTTTTERILFYSGVVHKIGEVHDGAAVTDWMAQERERGITITAAAISTSWQDHRINIIDTPGHVDFTIEVERSMRVLDGVIAVFCAVGGVQPQSETVWRQADRYSVPRMVFVNKMDRTGADFLKVHGQIKDRLKANAVPIQLPIGAEGELSGIIDLVANKAYIYKNDLGTDIEEADVPADMADEVAEWRNTLMETVAETDEALIEKFLESGELSVDDLKKGIREGVLKHGLVPMLCGSAFKNKGVQLVLDAVIDYLPAPVDVPPIQGVLPDGSEAVRPSDDSAPFSALAFKVMADPYGKLTFVRMYSGILEKGSYVLNSTKGEKERISRLVVLKADDREEVDALRAGDLGAVLGLKNTTTGDTLCTQDDPIVLETLFIPEPVISVAVEPKTKGDMEKLSKALVALAEEDPTFRVNTDSETGQTVIAGMGELHLEILVDRMLREFKVEANIGAPQVSYRETIRGSAGGEGKFSRQTGGKGQYGHVVIEMEPGEPGSGFEFVNKIVGGVVPKEYIKPAEQGMKETCESGVIAGYPLIDVKCTLVHGSYHDVDSSEMAFKIAGSMAFKDGVKKCNPVLLEPMMKVEVEAPEDFLGSIIGDLSSRRGQVEGQSVEDGTSKISAKVPLAEMFGYATELRSMTQGRGIFSMEFDNYAEVPRNVAEAIISKNQGNS.

Positions 8 to 282 (ERVRNIGIAA…AVIDYLPAPV (275 aa)) constitute a tr-type G domain. GTP-binding positions include 17-24 (AHIDAGKT), 81-85 (DTPGH), and 135-138 (NKMD).

It belongs to the TRAFAC class translation factor GTPase superfamily. Classic translation factor GTPase family. EF-G/EF-2 subfamily.

Its subcellular location is the cytoplasm. Its function is as follows. Catalyzes the GTP-dependent ribosomal translocation step during translation elongation. During this step, the ribosome changes from the pre-translocational (PRE) to the post-translocational (POST) state as the newly formed A-site-bound peptidyl-tRNA and P-site-bound deacylated tRNA move to the P and E sites, respectively. Catalyzes the coordinated movement of the two tRNA molecules, the mRNA and conformational changes in the ribosome. This Synechococcus sp. (strain CC9605) protein is Elongation factor G.